A 146-amino-acid polypeptide reads, in one-letter code: Superoxide dismutase [Mn] 2 (146 aa).

Mn(2+) is bound by residues His42, Asp126, and His130.

The protein belongs to the iron/manganese superoxide dismutase family. Requires Mn(2+) as cofactor.

It carries out the reaction 2 superoxide + 2 H(+) = H2O2 + O2. In terms of biological role, destroys superoxide anion radicals which are normally produced within the cells and which are toxic to biological systems. This chain is Superoxide dismutase [Mn] 2 (sod2), found in Haloferax mediterranei (Halobacterium mediterranei).